The following is a 76-amino-acid chain: Esculentin-2MT1 (76 aa).

Positions Met1–Cys22 are cleaved as a signal peptide. A propeptide spanning residues Glu23–Val37 is cleaved from the precursor. Cysteines 70 and 76 form a disulfide.

It belongs to the frog skin active peptide (FSAP) family. Esculentin subfamily. In terms of tissue distribution, expressed by the skin glands.

Its subcellular location is the secreted. Antimicrobial peptide. In Amolops mantzorum (Sichuan torrent frog), this protein is Esculentin-2MT1.